The following is a 143-amino-acid chain: Hemoglobin subunit alpha-2 (143 aa).

Serine 2 is modified (N-acetylserine). The 142-residue stretch at 2–143 (SLSTKDKDTV…LARALSEKYR (142 aa)) folds into the Globin domain. Heme b-binding residues include histidine 60 and histidine 89.

It belongs to the globin family. Hb 2 is a heterotetramer of two alpha-2 and two beta chains. In terms of tissue distribution, red blood cells.

Its function is as follows. Involved in oxygen transport from gills to the various peripheral tissues. This chain is Hemoglobin subunit alpha-2, found in Cottoperca gobio (Frogmouth).